The primary structure comprises 548 residues: Membrane protein insertase YidC (548 aa).

Transmembrane regions (helical) follow at residues 6–26 (NLIL…WESD), 357–377 (NWGV…FPLT), 424–444 (LGGC…YWAL), 455–475 (FALW…PILM), and 503–523 (PIIF…YWLV).

The protein belongs to the OXA1/ALB3/YidC family. Type 1 subfamily. Interacts with the Sec translocase complex via SecD. Specifically interacts with transmembrane segments of nascent integral membrane proteins during membrane integration.

It is found in the cell inner membrane. Functionally, required for the insertion and/or proper folding and/or complex formation of integral membrane proteins into the membrane. Involved in integration of membrane proteins that insert both dependently and independently of the Sec translocase complex, as well as at least some lipoproteins. Aids folding of multispanning membrane proteins. This Aeromonas hydrophila subsp. hydrophila (strain ATCC 7966 / DSM 30187 / BCRC 13018 / CCUG 14551 / JCM 1027 / KCTC 2358 / NCIMB 9240 / NCTC 8049) protein is Membrane protein insertase YidC.